The following is a 104-amino-acid chain: Large ribosomal subunit protein uL24 (104 aa).

The protein belongs to the universal ribosomal protein uL24 family. In terms of assembly, part of the 50S ribosomal subunit.

One of two assembly initiator proteins, it binds directly to the 5'-end of the 23S rRNA, where it nucleates assembly of the 50S subunit. Its function is as follows. One of the proteins that surrounds the polypeptide exit tunnel on the outside of the subunit. This chain is Large ribosomal subunit protein uL24, found in Psychromonas ingrahamii (strain DSM 17664 / CCUG 51855 / 37).